Reading from the N-terminus, the 79-residue chain is Small ribosomal subunit protein bS18 (79 aa).

This sequence belongs to the bacterial ribosomal protein bS18 family. Part of the 30S ribosomal subunit. Forms a tight heterodimer with protein bS6.

Binds as a heterodimer with protein bS6 to the central domain of the 16S rRNA, where it helps stabilize the platform of the 30S subunit. The protein is Small ribosomal subunit protein bS18 of Bradyrhizobium sp. (strain BTAi1 / ATCC BAA-1182).